Here is a 190-residue protein sequence, read N- to C-terminus: 3-isopropylmalate dehydratase small subunit (190 aa).

This sequence belongs to the LeuD family. LeuD type 1 subfamily. In terms of assembly, heterodimer of LeuC and LeuD.

The catalysed reaction is (2R,3S)-3-isopropylmalate = (2S)-2-isopropylmalate. Its pathway is amino-acid biosynthesis; L-leucine biosynthesis; L-leucine from 3-methyl-2-oxobutanoate: step 2/4. Catalyzes the isomerization between 2-isopropylmalate and 3-isopropylmalate, via the formation of 2-isopropylmaleate. This Staphylococcus aureus (strain MSSA476) protein is 3-isopropylmalate dehydratase small subunit.